The primary structure comprises 92 residues: Transcription factor ILI6 (92 aa).

A disordered region spans residues 1 to 20 (MSSRRSRSRQSGSSRITDEQ). The region spanning 5-59 (RSRSRQSGSSRITDEQISDLVSKLQDLLPEARLRSNDRVPSSRVLQETCNYIRSL) is the bHLH domain.

Belongs to the bHLH protein family. As to quaternary structure, interacts with APG.

Its subcellular location is the nucleus. In terms of biological role, atypical and probable non DNA-binding bHLH transcription factor that acts as a positive regulator of grain size. Binds the transcription repressor APG and forms a heterodimer of antagonistic bHLH transcription factors that regulates grain length and weight by controlling cell elongation in lemma and palea. May be involved in the control of lamina inclination through brassinosteroid signaling pathway. In Oryza sativa subsp. indica (Rice), this protein is Transcription factor ILI6 (ILI6).